The following is a 210-amino-acid chain: UPF0301 protein M446_6268 (210 aa).

Belongs to the UPF0301 (AlgH) family.

This Methylobacterium sp. (strain 4-46) protein is UPF0301 protein M446_6268.